The following is an 87-amino-acid chain: Acyl-CoA-binding protein (87 aa).

At S2 the chain carries N-acetylserine. The region spanning 2-87 (SQAEFDKAAE…VEELKKKYGI (86 aa)) is the ACB domain. K8 carries the post-translational modification N6-acetyllysine; alternate. K8 carries the post-translational modification N6-succinyllysine; alternate. An an acyl-CoA-binding site is contributed by K14. At K17 the chain carries N6-succinyllysine. At K19 the chain carries N6-acetyllysine. Y29 bears the Phosphotyrosine mark. An acyl-CoA contacts are provided by residues 29 to 33 (YSHYK), K51, K55, and Y74. An N6-acetyllysine modification is found at K51. K55 carries the N6-acetyllysine; alternate modification. N6-succinyllysine; alternate is present on K55. N6-(2-hydroxyisobutyryl)lysine; alternate is present on K55. K55 is modified (N6-malonyllysine; alternate). At K77 the chain carries N6-acetyllysine; alternate. Position 77 is an N6-succinyllysine; alternate (K77).

This sequence belongs to the ACBP family. As to quaternary structure, monomer.

Its subcellular location is the endoplasmic reticulum. The protein localises to the golgi apparatus. In terms of biological role, binds medium- and long-chain acyl-CoA esters with very high affinity and may function as an intracellular carrier of acyl-CoA esters. The polypeptide is Acyl-CoA-binding protein (DBI) (Chaetophractus villosus (South American armadillo)).